Here is a 428-residue protein sequence, read N- to C-terminus: UPF0053 inner membrane protein YfjD (428 aa).

Topologically, residues 1-3 are cytoplasmic; the sequence is MEH. Residues 2 to 192 enclose the CNNM transmembrane domain; sequence EHISTTTLII…SQISRRNQDM (191 aa). A helical transmembrane segment spans residues 4-24; it reads ISTTTLIIILIIMVVISAYFS. Residues 25 to 64 lie on the Periplasmic side of the membrane; the sequence is GSETGMMTLNRYRLRHMAKQGNRSAKRVEKLLRKPDRLIS. Residues 65–85 form a helical membrane-spanning segment; that stretch reads LVLIGNNLVNILASALGTIVG. Over 86–91 the chain is Cytoplasmic; sequence MRLYGD. A helical membrane pass occupies residues 92–112; sequence AGVAIATGVLTFVVLVFAEVL. Over 113-129 the chain is Periplasmic; sequence PKTIAALYPEKVAYPSS. A helical membrane pass occupies residues 130-150; the sequence is FLLAPLQILMMPLVWLLNAIT. Over 151–428 the chain is Cytoplasmic; sequence RMLMRMMGIK…VKPLRESVAE (278 aa). CBS domains lie at 208 to 270 and 272 to 332; these read MVPR…FTKE and MLRA…FTTS.

This sequence belongs to the UPF0053 family.

Its subcellular location is the cell inner membrane. The sequence is that of UPF0053 inner membrane protein YfjD (yfjD) from Escherichia coli (strain K12).